Reading from the N-terminus, the 3856-residue chain is MKLQNPDKKTLREGFSQESSVVALDSGVLAMSGLKCDGKFPVKDVLMEEGGDKVRKIQVSGGNISLVVDFSGARTSSNNFFESNASCVNENLVKGNGYREDETQEFLVGNLVWVMTKYKKWWPGEVVDFKADAKESFMVRSIGQSHLVSWFASSKLKPFKESFEQVLNQRNDNGFFDALQKAMSLLSNSLKLDMTCSCIADGNGIVSAQNITTRKNKPLILREFSVDRLEPKEFVTQLKNIAKCVLNAGVLESTVMQSQLSAFYTLFGHKQIPMAQLHENEGRKSFTAKMSDSKFIGSPSICAGNSRKRFRKEWFRKFVSEVDNVSARDDLVNVPPSDLISKLKLLAVGYNCSEETENIGLFEWFFSKFRISVYHDENAYKMQLANMAGFKDLMLATNANRGTVQKTLKSKKIGKSKMEPLNGVSVADTEQKTFELQISKKSNIESLNGVSVADTEQKTFELQILEKSNIESLNGVSTPNIDHEASKSNNSGKTKINHIIGHSNFPSSVAKVQLAKDFQDKLLVQAPDRKAMTADTLSRPAAILVPDLNSGGNALGTAEFDHMQRPETLIQHNVCPQEEKTPRSTILNFQVTAHQGVSGTQFVSSQPTSYKHFTSADLFTYSGKKKRGRKRKNAEELPIVAHASATTGIPDLNGTNTEPTLVLPQVEPTQRRRRRKKEESPNGLTRGITILFLKFSSQVSMPSRDDLTSTFSAFGPLDSSETHVSEEFSGAQVAFVSSADAIEAVKSLEKANPFGETLVNFRLQQKLITVQRNIAPRMPVISHVSPVPKPNNIPTSMDAMRQNLLMMTAMLEKSGDSLSRETKAKLKSEITGLLEKDGVKLLNTWLEGERSITFCRFLSQNTAKLKLDEIPNAETWPFLVKLLLQCVSMEVSGSKRRMPKPTFAKTLRVVVQRTEETKFPGVQFPLLSMAKTLFTHVHDILSNTPSFQSEYGTILRHLLEIKEYRFQMRKRTYSSLVLLYMERAETGFCEKNSGQHSQKEEAFRYILTLQSLLENSPGDFPDDLREEIVNGLIHIFSSVRDEGKLSRKLIECVNTFLLKDGPNLGSLSLEIHNAVEQFVFRCWLTTHDKNLKEILVSYGRLQLNLTRDSSESSSLVEQLLDVVTRELDLGSSSSSASWGDTTKDEKLGALSSYQNSLVELAAHVFYRACVNTSRPSLSEKRARRQHIAMRMVDALTEGKWLWCAAFGCLVRNYCARINMDLLIYWFEAICTNFQRLLEDASMRRSYDGLLWTLRSLQGLSSGLSLPDITMDISKSSASSSELDRGWQSIWSSLIHGLATFSSMSVIVDAVLVLLGSIISSNHITVKILPQEVWDHQLFRHIPSEPALYFIACYFSRMGCQGNLQDDLHLRRNLLRAVCAPLSWKVRLTLDERMVQLLPAAAFSLCAGFKVSLPLPKEHLPTPSQWDVCEQIDDVDRERNFGLFECSVEALTRICSNSSKISGCQVPDVVQLPLVLRDPLLHDMDIYFLSIIPEVKEKGPLSDIFMGCALLCHFMHGSYITRKGKGSSSFFLKACQYLLEGLDHAVESVSKSLNDLQRRGSLGFGSDFNEKGSIIVSLRSFTQSPVFSNRRDQNLLGASYDFVIHSLENLLRSFAKVYEEYTEHAWNTHSDTVPSKSLAPDSPEVGRIVDMDLDLAEDTKERDIIAAGGKAVPGLPVSMGNWKLGMVSLISCFSPVLQFPTWDVLYNLLEKESDPKVLENILYHLCKLSCLTSIPKVDDLVIFLDGMLSTQVKMKRNCLNIVTALHVLLHTLSSSRRDSSGVEKNCGLSLKEAESFQVFVQLGAMVNKVSEFGLLGWFGRVKLINCICDLVLLNPQTGQTMIERLLLMLSDSDYRVRFVLARQIGILFQTWDGHEALFQDICSSFGIKLVTSSKEKLVTAKDVLAVGPQPRQKMETVIITLMHLAYHSENIELQAVFMMCAVSAKDPCQRELIIAALDNLSAQLHYPSRFKYLEELLGPILFHWIASGVSLAGLIETSQLFIPNAEPKYFIHFCSHWLLPALLLHEDHTNLDWVAKMAGQPVVVLVKENFVPIFSICMGLHCSKTSECDKGAMVLQNSILYVGETSENERDKLIKQNMVSIVSFILSCASSSPEPPVPTFSRDTISLAVQTVVDGFLENTDYPKNAAITDRINIFRPDRVFMFITEMHYRMSAACHHRHTRHHLAALEELTILLGHRALVPSSLNYIFNLVGQFIGYPSLQDQCCSIASCLLDLFKSNPAKEIVSVLGDQLQFLVSKLVTCCIDAEADTKISGAKSSQLVNLLHKLVVSSDSSLNEDIRDLEPLPDLKYFQVIRESHIRICEAYSPRNHLLKVEHSTFLIYIFLEILSLSNFLFLSCSTIQQCSRRSNYLPPRFLSRSLQALHNKLIASEVSQEDTNGETAETFWQSDDEIVNAVWTLVRVSASDEADSMRLLVSDFLSRIGIRDPHTVVFHLPGNLVSMHGLQGFGHNTGSKVRSLTENGISDETLITLLNFLKKYLLDDSVKIIDVTSQTLRGILSTERGQQALSSFDSCERALIEVHGRGVNLDIVEKILLDSQKQFKAEKFSLETPEVWSTDNKNFDRWICQLVYCMIALCEDVPIRLCQNIALLKAEISELLFPSVVVSLAGRIGMDINLHDLITSQVKEHIFTDSNKLTKSKQVMLNTLNELRMCYVLERSIFSGQTKREKNSRSCSTAAKIRDVESGSNGMAASITTNWEKVYWLSIDYLVVAGSAVVCGAYLTASMYVEYWCEEKFGNLSLGDPDFSYHDKLPDHVEILVSAITRINEPDSLYGVIHSNKLSAQIITFEHEGNWTRALEYYDLQARSQKMVVPSSLSENLEVEQFQPTTSARHSVFGEGEVQRQPFKGLIRSLQQTGCMHVLDLYCRGLTSREGCFQYDPEFIELQYEAAWRAGKWDFSLLYPQTHCQPLQHAKNNNYHESLHCCLRALQEGDYDGFYGKLKDTKKELVLSISRASEESTEFIYSTVVKLQILHHLGLVWDLRWTTSSHQSVHGYLVKQMACVDPVIPTMDQLSWLNKDWNSIITQTQLHMTLLEPFIAFRRVLLQILGCEKCTMQHLLQSASLLRKGTRFSHAAASLHEFKFLCARSNGQQPVPDWLGKLEEAKLLHAQGRHEVSISLANYILHNYQLKEEASDIYRVIGKWLAETRSSNSRTILEKYLRPAVSLAEEQSSKICKRLVDRQSQTWFHLAHYADALFKSYEERLSSSEWQAALRLRKHKTKELEVFIKRFKSSKKAEQSDYSLKIQDLQKQLTMDKEEAEKLQVDRDNFLKLALEGYKRCLEIGDKYDVRVVFRQVSMWFSLASQKNVIDNMLSTIKEVQSYKFIPLVYQIASRLGSSKDESGSNSFQSALVSLIRKMAIDHPYHTILQLLALANGDRIKDNQRSRNSFVVDMDKKLAAEHLLQDVSHYHGPMIRQMKQLVDIYIKLAELETRREDTNRKVALPREIRSVKQLELVPVVTATIPVDRSCQYNEGSFPFFRGLSDSVTVMNGINAPKVVECFGSDGQKYKQLAKSGNDDLRQDAVMEQFFGLVNTFLHNNRDTWKRRLAVRTYKVIPFTPSAGVLEWVDGTIPLGDYLIGSSRSEGAHGRYGIGNWKYPKCREHMSSAKDKRKAFVDVCTNFRPVMHYFFLEKFLQPADWFVKRLAYTRSVAASSMVGYIVGLGDRHAMNILIDQATAEVVHIDLGVAFEQGLMLKTPERVPFRLTRDIIDGMGITGVEGVFRRCCEETLSVMRTNKEALLTIVEVFIHDPLYKWALSPLKALQRQKETEDYDGMNLEGLQEEFEGNKDATRALMRVKQKLDGYEGGEMRSIHGQAQQLIQDAIDTDRLSHMFPGWGAWM.

The PWWP domain maps to 108–162 (VGNLVWVMTKYKKWWPGEVVDFKADAKESFMVRSIGQSHLVSWFASSKLKPFKES). The tract at residues 648–681 (GIPDLNGTNTEPTLVLPQVEPTQRRRRRKKEESP) is disordered. Residues 2727–3393 (VVAGSAVVCG…ILQLLALANG (667 aa)) form the FAT domain. Positions 3233–3249 (RKHKTKELEVFIKRFKS) match the Bipartite nuclear localization signal motif. The PI3K/PI4K catalytic domain occupies 3499–3811 (LSDSVTVMNG…GNKDATRALM (313 aa)). Residues 3505-3511 (VMNGINA) are G-loop. Positions 3678–3686 (GLGDRHAMN) are catalytic loop. The interval 3698 to 3722 (HIDLGVAFEQGLMLKTPERVPFRLT) is activation loop. The 33-residue stretch at 3824 to 3856 (EMRSIHGQAQQLIQDAIDTDRLSHMFPGWGAWM) folds into the FATC domain.

The protein belongs to the PI3/PI4-kinase family. Interacts with RUG3. Ubiquitously expressed at low levels with slightly higher levels in flower buds.

The protein resides in the nucleus. The catalysed reaction is L-seryl-[protein] + ATP = O-phospho-L-seryl-[protein] + ADP + H(+). It carries out the reaction L-threonyl-[protein] + ATP = O-phospho-L-threonyl-[protein] + ADP + H(+). Its function is as follows. Serine/threonine protein kinase which activates checkpoint signaling upon genotoxic stresses such as ionizing radiation (IR) or DNA replication stalling. Plays a central role in the perception and response to both stress-induced damage in somatic cells and developmentally programmed DNA damage during meiosis. Recognizes the substrate consensus sequence [ST]-Q. Phosphorylates histone variant H2AX to form H2AXS139ph at double strand breaks (DSBs), thereby regulating DNA damage response mechanism. Involved in transcriptional regulation of RAD51, PARP1, GR1, and LIG4 in response to DNA double strand breaks. Plays a dual role by activating the DNA damage response at dysfunctional telomeres and yet preventing this activation at functional telomeres. Not required for telomere length homeostasis. Regulates DNA damage response (DDR) synergistically with RUG3. Together with RUG3, involved in the splicing of the ND2/NAD2 mRNA. In Arabidopsis thaliana (Mouse-ear cress), this protein is Serine/threonine-protein kinase ATM.